A 1382-amino-acid polypeptide reads, in one-letter code: Hepatocyte growth factor receptor (1382 aa).

A signal peptide spans 1–24 (MKASAVLAPGILVILFTLVQKSNC). Over 25–933 (ECKEALVKSK…VIVQPDQNIT (909 aa)) the chain is Extracellular. Positions 27–516 (KEALVKSKMN…TGKKITKIPL (490 aa)) constitute a Sema domain. Asn-45 carries N-linked (GlcNAc...) asparagine glycosylation. 4 disulfide bridges follow: Cys-95–Cys-101, Cys-98–Cys-160, Cys-133–Cys-141, and Cys-173–Cys-176. Residue Asn-106 is glycosylated (N-linked (GlcNAc...) asparagine). Asn-203 and Asn-359 each carry an N-linked (GlcNAc...) asparagine glycan. 2 cysteine pairs are disulfide-bonded: Cys-299–Cys-364 and Cys-386–Cys-398. N-linked (GlcNAc...) asparagine glycans are attached at residues Asn-400 and Asn-406. Disulfide bonds link Cys-521-Cys-539, Cys-527-Cys-562, Cys-530-Cys-546, and Cys-542-Cys-552. IPT/TIG domains follow at residues 564 to 656 (PTIY…FSYV), 658 to 740 (PIIT…FSYQ), and 743 to 837 (PIIY…LIYV). A glycan (O-linked (Man) threonine) is linked at Thr-583. Asn-608 and Asn-636 each carry an N-linked (GlcNAc...) asparagine glycan. Residues Thr-677 and Thr-762 are each glycosylated (O-linked (Man) threonine). 3 N-linked (GlcNAc...) asparagine glycosylation sites follow: Asn-786, Asn-880, and Asn-931. The helical transmembrane segment at 934–956 (EFIVGILSISGILLTLLGLLLWW) threads the bilayer. Topologically, residues 957 to 1382 (KKKKQIKDLG…QDNFDSEGNT (426 aa)) are cytoplasmic. Phosphoserine is present on Ser-967. Phosphothreonine is present on Thr-978. Residues Ser-991, Ser-998, and Ser-1001 each carry the phosphoserine modification. Tyr-1004 carries the phosphotyrosine modification. Residues 1079–1346 (VHFNEVIGRG…RISAIFSTFI (268 aa)) form the Protein kinase domain. Residues 1085 to 1093 (IGRGHFGCV) and Lys-1111 contribute to the ATP site. Asp-1205 serves as the catalytic Proton acceptor. Positions 1213-1382 (LDENFTVKVA…QDNFDSEGNT (170 aa)) are interaction with RANBP9. Tyr-1231 is modified (phosphotyrosine). 2 positions are modified to phosphotyrosine; by autocatalysis: Tyr-1235 and Tyr-1236. A Phosphothreonine modification is found at Thr-1290. Residues 1321 to 1360 (WHPKAELRPSFSELVSRISAIFSTFIGEHYVHVNATYVNI) form an interaction with MUC20 region. A phosphotyrosine; by autocatalysis mark is found at Tyr-1350 and Tyr-1357. The residue at position 1366 (Tyr-1366) is a Phosphotyrosine.

Belongs to the protein kinase superfamily. Tyr protein kinase family. In terms of assembly, heterodimer made of an alpha chain (50 kDa) and a beta chain (145 kDa) which are disulfide linked. Binds PLXNB1. Interacts when phosphorylated with downstream effectors including STAT3, PIK3R1, SRC, PCLG1, GRB2 and GAB1. Interacts with SPSB1, SPSB2 and SPSB4. Interacts with INPP5D/SHIP1. When phosphorylated at Tyr-1357, interacts with INPPL1/SHIP2. Interacts with RANBP9 and RANBP10, as well as SPSB1, SPSB2, SPSB3 and SPSB4. SPSB1 binding occurs in the presence and in the absence of HGF, however HGF treatment has a positive effect on this interaction. Interacts with MUC20; prevents interaction with GRB2 and suppresses hepatocyte growth factor-induced cell proliferation. Interacts with GRB10. Interacts with PTPN1 and PTPN2. Interacts with tensin TNS3. Interacts (when phosphorylated) with tensin TNS4 (via SH2 domain); the interaction increases MET protein stability by inhibiting MET endocytosis and subsequent lysosomal degradation. Autophosphorylated in response to ligand binding on Tyr-1235 and Tyr-1236 in the kinase domain leading to further phosphorylation of Tyr-1350 and Tyr-1357 in the C-terminal multifunctional docking site. Dephosphorylated by PTPRJ at Tyr-1350 and Tyr-1366. Dephosphorylated by PTPN1 and PTPN2. Post-translationally, ubiquitinated. Ubiquitination by CBL regulates the receptor stability and activity through proteasomal degradation. In terms of processing, O-mannosylation of IPT/TIG domains by TMEM260 is required for protein maturation. O-mannosylated residues are composed of single mannose glycans that are not elongated or modified.

It is found in the membrane. It catalyses the reaction L-tyrosyl-[protein] + ATP = O-phospho-L-tyrosyl-[protein] + ADP + H(+). With respect to regulation, in its inactive state, the C-terminal tail interacts with the catalytic domain and inhibits the kinase activity. Upon ligand binding, the C-terminal tail is displaced and becomes phosphorylated, thus increasing the kinase activity. Functionally, receptor tyrosine kinase that transduces signals from the extracellular matrix into the cytoplasm by binding to hepatocyte growth factor/HGF ligand. Regulates many physiological processes including proliferation, scattering, morphogenesis and survival. Ligand binding at the cell surface induces autophosphorylation of MET on its intracellular domain that provides docking sites for downstream signaling molecules. Following activation by ligand, interacts with the PI3-kinase subunit PIK3R1, PLCG1, SRC, GRB2, STAT3 or the adapter GAB1. Recruitment of these downstream effectors by MET leads to the activation of several signaling cascades including the RAS-ERK, PI3 kinase-AKT, or PLCgamma-PKC. The RAS-ERK activation is associated with the morphogenetic effects while PI3K/AKT coordinates prosurvival effects. During embryonic development, MET signaling plays a role in gastrulation, development and migration of muscles and neuronal precursors, angiogenesis and kidney formation. In adults, participates in wound healing as well as organ regeneration and tissue remodeling. Also promotes differentiation and proliferation of hematopoietic cells. The protein is Hepatocyte growth factor receptor (MET) of Atelerix albiventris (Middle-African hedgehog).